A 340-amino-acid chain; its full sequence is Methionine import ATP-binding protein MetN 1 (340 aa).

The 241-residue stretch at 2–242 folds into the ABC transporter domain; the sequence is IRLENVSVDF…PQHAYTKQLV (241 aa). 39-46 is an ATP binding site; that stretch reads GTSGAGKS.

It belongs to the ABC transporter superfamily. Methionine importer (TC 3.A.1.24) family. As to quaternary structure, the complex is composed of two ATP-binding proteins (MetN), two transmembrane proteins (MetI) and a solute-binding protein (MetQ).

It is found in the cell inner membrane. The catalysed reaction is L-methionine(out) + ATP + H2O = L-methionine(in) + ADP + phosphate + H(+). The enzyme catalyses D-methionine(out) + ATP + H2O = D-methionine(in) + ADP + phosphate + H(+). In terms of biological role, part of the ABC transporter complex MetNIQ involved in methionine import. Responsible for energy coupling to the transport system. This is Methionine import ATP-binding protein MetN 1 from Pectobacterium atrosepticum (strain SCRI 1043 / ATCC BAA-672) (Erwinia carotovora subsp. atroseptica).